A 181-amino-acid polypeptide reads, in one-letter code: Large ribosomal subunit protein uL6 (181 aa).

The protein belongs to the universal ribosomal protein uL6 family. As to quaternary structure, part of the 50S ribosomal subunit.

Its function is as follows. This protein binds to the 23S rRNA, and is important in its secondary structure. It is located near the subunit interface in the base of the L7/L12 stalk, and near the tRNA binding site of the peptidyltransferase center. This is Large ribosomal subunit protein uL6 from Synechococcus sp. (strain JA-2-3B'a(2-13)) (Cyanobacteria bacterium Yellowstone B-Prime).